A 402-amino-acid polypeptide reads, in one-letter code: Multidrug resistance protein MdtH (402 aa).

Over 1-12 (MSRVSQARNLGK) the chain is Cytoplasmic. Residues 13–33 (YFLLIDNMLVVLGFFVVFPLI) traverse the membrane as a helical segment. Residues 34 to 98 (SIRFVDQMGW…GFATMGIAHE (65 aa)) are Periplasmic-facing. The helical transmembrane segment at 99 to 116 (PWLLWFSCFLSGLGGTLF) threads the bilayer. At 117 to 138 (DPPRSALVVKLIRPEQRDRFFS) the chain is on the cytoplasmic side. A helical membrane pass occupies residues 139-159 (LLMMQDSAGAVIGALLGSWLL). Topologically, residues 160–164 (QYDFR) are periplasmic. A helical transmembrane segment spans residues 165–185 (LVCATGAILFILCALFNAWLL). At 186 to 213 (PAWKLSTVRTPVREGMRRVMSDKRFVTY) the chain is on the cytoplasmic side. Residues 214–234 (VLTLAGYYMLAVQVMLMLPIM) form a helical membrane-spanning segment. The Periplasmic segment spans residues 235 to 243 (VNDIAGSPA). A helical transmembrane segment spans residues 244–264 (AVKWMYAIEACLSLTLLYPIA). Over 265-276 (RWSEKRFRLEHR) the chain is Cytoplasmic. A helical membrane pass occupies residues 277 to 297 (LMAGLLVMSLSMLPIGMVGNL). The Periplasmic segment spans residues 298–299 (QQ). The chain crosses the membrane as a helical span at residues 300–320 (LFTLICAFYIGSVIAEPARET). Residues 321–339 (LSASLADARARGSYMGFSR) lie on the Cytoplasmic side of the membrane. The chain crosses the membrane as a helical span at residues 340-360 (LGLAIGGAIGYIGGGWLFDMG). Over 361–367 (KALAQPE) the chain is Periplasmic. A helical membrane pass occupies residues 368 to 388 (LPWMMLGIIGFITFLALGWQF). The Cytoplasmic portion of the chain corresponds to 389 to 402 (SHKRTPRRMLEPGA).

This sequence belongs to the major facilitator superfamily. DHA1 family. MdtH (TC 2.A.1.2.21) subfamily.

Its subcellular location is the cell inner membrane. This Salmonella typhimurium (strain LT2 / SGSC1412 / ATCC 700720) protein is Multidrug resistance protein MdtH.